Reading from the N-terminus, the 410-residue chain is MAAEIHSRPQSSRPVLLSKIEGHQDAVTAALLIPKEDGVITASEDRTIRVWLKRDSGQYWPSIYHTMASPCSAMAYHHDSRRIFVGQDNGAVMEFHVSEDFNKMNFIKTYPAHQNRVSAIIFSLAAEWVISTGHDKCVSWMCTRSGNMLGRHFFSSWASCLQYDLDTQHAFVGDYSGQITLLKLEQNTCSVITTLKGHEGSIACLWWDPIQRLLFSGASDNSVIMWDIGGRKGRTLLLQGHHDRVQSLCYLQLTRQLVSCSADGGIAVWNMDVSREEAPQWLESDSCQKCEQPFFWNIKQMWDTKTLGLRQHHCRKCGQAVCGKCSSKRSSYPVMGFEFQVRVCDSCYDSIKDEDRTSLATFHEGKHNISHMSMDIARGLMVTCGTDRVVKIWDMTPVVGCSLATGFSPH.

6 WD repeats span residues 22-61, 66-105, 112-150, 153-192, 197-236, and 240-279; these read GHQDAVTAALLIPKEDGVITASEDRTIRVWLKRDSGQYWP, TMASPCSAMAYHHDSRRIFVGQDNGAVMEFHVSEDFNKMN, AHQNRVSAIIFSLAAEWVISTGHDKCVSWMCTRSGNMLG, FFSSWASCLQYDLDTQHAFVGDYSGQITLLKLEQNTCSVI, GHEGSIACLWWDPIQRLLFSGASDNSVIMWDIGGRKGRTL, and GHHDRVQSLCYLQLTRQLVSCSADGGIAVWNMDVSREEAP. The FYVE-type zinc-finger motif lies at 281–352; sequence WLESDSCQKC…VCDSCYDSIK (72 aa). Zn(2+) contacts are provided by Cys-287, Cys-290, Cys-314, Cys-317, Cys-322, Cys-325, Cys-344, and Cys-347. Residues 364 to 403 form a WD 7 repeat; that stretch reads EGKHNISHMSMDIARGLMVTCGTDRVVKIWDMTPVVGCSL. Ser-408 is subject to Phosphoserine.

As to quaternary structure, binds PtdIns3P in vitro with high specificity over other phosphoinositides. Interacts (via WD repeat 2) with tyrosine-phosphorylated TLR3 (via TIR domain) in response to poly(I:C). Interacts with TLR4 in response to LPS. Interacts with TICAM1 in response to poly(I:C).

It is found in the early endosome. Functionally, positively regulates TLR3- and TLR4-mediated signaling pathways by bridging the interaction between TLR3 or TLR4 and TICAM1. Promotes TLR3/4 ligand-induced activation of transcription factors IRF3 and NF-kappa-B, as well as the production of IFN-beta and inflammatory cytokines. The sequence is that of WD repeat and FYVE domain-containing protein 1 (Wdfy1) from Mus musculus (Mouse).